A 109-amino-acid polypeptide reads, in one-letter code: uncharacterized protein (109 aa).

An HTH cro/C1-type domain is found at 42-100 (LEEKLKQEKIDRKYLAEVTNIPYTTVSRIMRAEANREFNPEIDTILKIAKYFNCTMDEV). The H-T-H motif DNA-binding region spans 53 to 72 (RKYLAEVTNIPYTTVSRIMR).

This is an uncharacterized protein from Rickettsia conorii (strain ATCC VR-613 / Malish 7).